Reading from the N-terminus, the 458-residue chain is Argininosuccinate lyase (458 aa).

It belongs to the lyase 1 family. Argininosuccinate lyase subfamily.

It localises to the cytoplasm. The catalysed reaction is 2-(N(omega)-L-arginino)succinate = fumarate + L-arginine. Its pathway is amino-acid biosynthesis; L-arginine biosynthesis; L-arginine from L-ornithine and carbamoyl phosphate: step 3/3. The polypeptide is Argininosuccinate lyase (Salmonella schwarzengrund (strain CVM19633)).